The sequence spans 524 residues: Cytochrome P450 monooxygenase ATR4 (524 aa).

The chain crosses the membrane as a helical span at residues 13–36; that stretch reads IITYLDSLTWVGMALPLFSLCWAI. N-linked (GlcNAc...) asparagine glycosylation is found at Asn-291, Asn-444, and Asn-454.

This sequence belongs to the cytochrome P450 family. The cofactor is heme.

It localises to the membrane. Its pathway is mycotoxin biosynthesis. In terms of biological role, cytochrome P450 monooxygenase; part of the core atranone cluster (CAC) which products are predicted to catalyze most or all steps of mycotoxin atranone synthesis, starting from geranylgeranyl pyrophosphate (GGPP). The initial cyclization of GGPP to dolabellane is probably performed by the terpene cyclase ATR13. The Baeyer-Villiger oxidation near the end of the atranone synthesis, which converts atranones D and E to atranones F and G is predicted to be catalyzed by the monooxygenase ATR8. Of the CAC's other predicted gene products, the reducing PKS ATR6 might synthesize a polyketide chain. This polyketide is probably transferred onto the atranone backbone by the polyketide transferase ATR5. Other predicted CAC products include 4 oxygenases (ATR2, ATR3, ATR4, and ATR14), 3 short-chain reductases (ATR7, ATR9, and ATR10), and a methyltransferase (ATR12). These may all be involved in the various steps of atranone biosynthesis, although their specific roles must await experimental determination. This Stachybotrys chlorohalonatus (strain IBT 40285) protein is Cytochrome P450 monooxygenase ATR4.